The chain runs to 1030 residues: E3 ubiquitin-protein ligase mib1 (1030 aa).

The MIB/HERC2 1 domain occupies 6 to 74 (NNRVMMEGVG…AYDVRILDSA (69 aa)). Residues 80-132 (HDGTMCDTCRQQPIIGIRWKCAECTNYDLCTTCYHGDKHHLRHRFYRITTPGS) form a ZZ-type zinc finger. Residues C85, C88, C100, C103, C109, C112, H118, and H122 each contribute to the Zn(2+) site. An MIB/HERC2 2 domain is found at 143 to 221 (SKKITARGIF…MSDLKCVQDA (79 aa)). ANK repeat units lie at residues 430-460 (DINE…DVNG), 463-492 (AGHT…DLEA), 496-525 (DGDR…DLNA), 529-558 (RRQT…HPSL), 562-591 (EGDT…DVTI), 595-627 (NGFN…IVDE), 631-661 (DGYT…NLDV), 665-694 (NQQT…KLDV), and 698-727 (DGDT…VSKV). 2 consecutive RING-type zinc fingers follow at residues 817–852 (CMVC…LICK) and 864–899 (CVVC…VQCR). Positions 957-986 (ALQRDKDNTNVNADVQKLQQQLQDIKEQTM) form a coiled coil. An RING-type 3 zinc finger spans residues 987–1020 (CPVCLDRLKNMIFMCGHGTCQLCGDRMSECPICR).

As to quaternary structure, interacts with deltaA (dla) and deltaD (dld).

It localises to the cytoplasm. Its subcellular location is the cytoskeleton. The protein resides in the microtubule organizing center. The protein localises to the centrosome. It is found in the centriolar satellite. It localises to the cell membrane. The catalysed reaction is S-ubiquitinyl-[E2 ubiquitin-conjugating enzyme]-L-cysteine + [acceptor protein]-L-lysine = [E2 ubiquitin-conjugating enzyme]-L-cysteine + N(6)-ubiquitinyl-[acceptor protein]-L-lysine.. It functions in the pathway protein modification; protein ubiquitination. E3 ubiquitin-protein ligase that mediates ubiquitination of Delta receptors, which act as ligands of Notch proteins. Positively regulates the Delta-mediated Notch signaling by ubiquitinating the intracellular domain of Delta, leading to endocytosis of Delta receptors. It thereby participates in many processes regulated by the Notch signaling pathway, such as midline cell fate specification prior to germ layer formation, patterning of sensory cell differentiation in the ear, neurogenesis of the hindbrain and commitment to a secretory fate in the intestine. Essential for early embryonic development. In Danio rerio (Zebrafish), this protein is E3 ubiquitin-protein ligase mib1 (mib1).